The chain runs to 229 residues: uncharacterized protein (229 aa).

The 68-residue stretch at 2 to 69 folds into the S4 RNA-binding domain; sequence QRLAKIISNA…KPRLWIYYKP (68 aa). The active-site Nucleophile is the Asp102.

This sequence belongs to the pseudouridine synthase RsuA family.

It carries out the reaction a uridine in RNA = a pseudouridine in RNA. This is an uncharacterized protein from Rickettsia felis (strain ATCC VR-1525 / URRWXCal2) (Rickettsia azadi).